We begin with the raw amino-acid sequence, 263 residues long: Acyl-[acyl-carrier-protein]--UDP-N-acetylglucosamine O-acyltransferase (263 aa).

Belongs to the transferase hexapeptide repeat family. LpxA subfamily. In terms of assembly, homotrimer.

The protein localises to the cytoplasm. The catalysed reaction is a (3R)-hydroxyacyl-[ACP] + UDP-N-acetyl-alpha-D-glucosamine = a UDP-3-O-[(3R)-3-hydroxyacyl]-N-acetyl-alpha-D-glucosamine + holo-[ACP]. Its pathway is glycolipid biosynthesis; lipid IV(A) biosynthesis; lipid IV(A) from (3R)-3-hydroxytetradecanoyl-[acyl-carrier-protein] and UDP-N-acetyl-alpha-D-glucosamine: step 1/6. Involved in the biosynthesis of lipid A, a phosphorylated glycolipid that anchors the lipopolysaccharide to the outer membrane of the cell. The chain is Acyl-[acyl-carrier-protein]--UDP-N-acetylglucosamine O-acyltransferase from Campylobacter jejuni (strain RM1221).